Consider the following 233-residue polypeptide: Orotidine 5'-phosphate decarboxylase (233 aa).

Substrate is bound by residues aspartate 11, lysine 34, aspartate 61–threonine 70, threonine 117, arginine 179, glutamine 188, glycine 208, and arginine 209. Lysine 63 (proton donor) is an active-site residue.

This sequence belongs to the OMP decarboxylase family. Type 1 subfamily. Homodimer.

The enzyme catalyses orotidine 5'-phosphate + H(+) = UMP + CO2. It functions in the pathway pyrimidine metabolism; UMP biosynthesis via de novo pathway; UMP from orotate: step 2/2. Its function is as follows. Catalyzes the decarboxylation of orotidine 5'-monophosphate (OMP) to uridine 5'-monophosphate (UMP). In Streptococcus pneumoniae (strain P1031), this protein is Orotidine 5'-phosphate decarboxylase.